The primary structure comprises 589 residues: Ectoderm-neural cortex protein 1 (589 aa).

A BTB domain is found at 46–114 (TDVLLHAGNR…AYSSRVIINE (69 aa)). Kelch repeat units follow at residues 296 to 340 (ALFL…AIGC), 341 to 388 (KVYI…ELKH), 389 to 444 (CLYV…SAKL), 446 to 492 (LFAF…VLGN), 494 to 538 (IFIM…ASGN), and 539 to 585 (KLYV…STWK).

As to quaternary structure, binds to RB1. Hypophosphorylated RB1 associates with ENC1 during neuronal differentiation, while hyperphosphorylated RB1 associates with ENC1 in undifferentiating cells. Part of a complex that contains CUL3, RBX1 and ENC1. Interacts indirectly with KEAP1. Ubiquitinated by E3 ubiquitin ligase complex formed by CUL3 and RBX1 and probably targeted for proteasome-independent degradation. Quinone-induced oxidative stress increases its ubiquitination. As to expression, primarily expressed in the nervous system.

Its subcellular location is the nucleus matrix. The protein localises to the cytoplasm. The protein resides in the cytoskeleton. In terms of biological role, actin-binding protein involved in the regulation of neuronal process formation and in differentiation of neural crest cells. Down-regulates transcription factor NF2L2/NRF2 by decreasing the rate of protein synthesis and not via a ubiquitin-mediated proteasomal degradation mechanism. The polypeptide is Ectoderm-neural cortex protein 1 (Enc1) (Mus musculus (Mouse)).